Consider the following 437-residue polypeptide: Elongator complex protein 4 (437 aa).

A disordered region spans residues 179 to 247; that stretch reads FSKSSSPTTP…TKTGSQDSPL (69 aa). The span at 181 to 192 shows a compositional bias: polar residues; the sequence is KSSSPTTPSLEQ. Ser183 carries the post-translational modification Phosphoserine. Residues 220 to 237 are compositionally biased toward low complexity; that stretch reads SANNNNNNNNNSSSVTSS. The residue at position 242 (Ser242) is a Phosphoserine.

The protein belongs to the ELP4 family. As to quaternary structure, component of the elongator complex composed of Elp1, Elp2, Elp3, Elp4, Elp5 and Elp6. The elongator complex associates with and stabilizes microtubules; efficient interaction requires the full complex.

The protein resides in the cytoplasm. It is found in the nucleus. Its subcellular location is the cytoskeleton. The protein localises to the spindle. It participates in tRNA modification; 5-methoxycarbonylmethyl-2-thiouridine-tRNA biosynthesis. Functionally, component of the elongator complex, which is required for multiple tRNA modifications, including mcm5U (5-methoxycarbonylmethyl uridine), mcm5s2U (5-methoxycarbonylmethyl-2-thiouridine), and ncm5U (5-carbamoylmethyl uridine). The elongator complex catalyzes the formation of carboxymethyluridine in the wobble base at position 34 in tRNAs. Binding by the elongator complex stabilizes microtubules and promotes their growth. This induces central spindle asymmetry, promoting polarized signaling endosome trafficking during asymmetric cell division and cell fate assignation of sensory organ precursor cells. In Drosophila melanogaster (Fruit fly), this protein is Elongator complex protein 4.